Reading from the N-terminus, the 199-residue chain is Holliday junction branch migration complex subunit RuvA (199 aa).

Residues 1–65 (MIASLRGKLL…DRGQRLFGFG (65 aa)) are domain I. The domain II stretch occupies residues 66–144 (SKKDRESFEL…KFEMFLNEGT (79 aa)). A flexible linker region spans residues 145–155 (TESSFVDRETD). Positions 155–199 (DLATLALIQLGFDEKSATKQVADAKKLNPGLSASDIVKQVITGTR) are domain III.

This sequence belongs to the RuvA family. As to quaternary structure, homotetramer. Forms an RuvA(8)-RuvB(12)-Holliday junction (HJ) complex. HJ DNA is sandwiched between 2 RuvA tetramers; dsDNA enters through RuvA and exits via RuvB. An RuvB hexamer assembles on each DNA strand where it exits the tetramer. Each RuvB hexamer is contacted by two RuvA subunits (via domain III) on 2 adjacent RuvB subunits; this complex drives branch migration. In the full resolvosome a probable DNA-RuvA(4)-RuvB(12)-RuvC(2) complex forms which resolves the HJ.

The protein resides in the cytoplasm. Functionally, the RuvA-RuvB-RuvC complex processes Holliday junction (HJ) DNA during genetic recombination and DNA repair, while the RuvA-RuvB complex plays an important role in the rescue of blocked DNA replication forks via replication fork reversal (RFR). RuvA specifically binds to HJ cruciform DNA, conferring on it an open structure. The RuvB hexamer acts as an ATP-dependent pump, pulling dsDNA into and through the RuvAB complex. HJ branch migration allows RuvC to scan DNA until it finds its consensus sequence, where it cleaves and resolves the cruciform DNA. The chain is Holliday junction branch migration complex subunit RuvA from Leptospira biflexa serovar Patoc (strain Patoc 1 / Ames).